The chain runs to 211 residues: Claudin-7 (211 aa).

The Cytoplasmic segment spans residues 1–7; it reads MANSGLQ. The chain crosses the membrane as a helical span at residues 8–28; the sequence is LLGFSMAMLGWVGLIASTAIP. The Extracellular portion of the chain corresponds to 29 to 81; that stretch reads QWQMSSYAGDNIITAQAMYKGLWMECVTQSTGMMSCKMYDSVLALPGALQATR. A helical transmembrane segment spans residues 82 to 102; that stretch reads ALMVVSLVLGFLAMFVATMGM. The Cytoplasmic segment spans residues 103 to 119; the sequence is KCTRCGGDDKAKKARIA. Residues 120-140 form a helical membrane-spanning segment; the sequence is MTGGIVFIVAGLAALVACSWI. Residues 141–160 are Extracellular-facing; it reads GHQIVTDFYNPLTPMNVKYE. A helical membrane pass occupies residues 161–181; that stretch reads FGPAIFIGWAGSALVLLGGAL. The Cytoplasmic portion of the chain corresponds to 182–211; that stretch reads LSCSCPGSESKAAYRAPRSYPKSNSSKEYV. The interactions with TJP1, TJP2 and TJP3 stretch occupies residues 210-211; sequence YV.

The protein belongs to the claudin family. In terms of assembly, directly interacts with TJP1/ZO-1, TJP2/ZO-2 and TJP3/ZO-3. The phosphorylated form interacts with EPCAM. In terms of processing, phosphorylated. In terms of tissue distribution, expressed predominantly in lung and kidney.

It localises to the cell membrane. Its subcellular location is the basolateral cell membrane. The protein localises to the cell junction. The protein resides in the tight junction. Functionally, plays a major role in tight junction-specific obliteration of the intercellular space, through calcium-independent cell-adhesion activity. The polypeptide is Claudin-7 (Cldn7) (Mus musculus (Mouse)).